The following is a 443-amino-acid chain: Differentially expressed in FDCP 8 homolog B (443 aa).

The segment at 14-49 (HLNPFDKKGGAERHPADSETQPCKDSSTSSPLSVPE) is disordered. Residues 17–30 (PFDKKGGAERHPAD) are compositionally biased toward basic and acidic residues. Residues 31–45 (SETQPCKDSSTSSPL) are compositionally biased toward polar residues. 2 Phorbol-ester/DAG-type zinc fingers span residues 134–185 (EHRF…TKPC) and 364–424 (IHTT…STSC).

It belongs to the DEF8 family.

Functionally, positively regulates lysosome peripheral distribution and ruffled border formation in osteoclasts. Involved in bone resorption. The polypeptide is Differentially expressed in FDCP 8 homolog B (def8-b) (Xenopus laevis (African clawed frog)).